The chain runs to 505 residues: Glycerol kinase (505 aa).

Residue Thr12 participates in ADP binding. The ATP site is built by Thr12, Thr13, and Ser14. Thr12 provides a ligand contact to sn-glycerol 3-phosphate. Arg16 lines the ADP pocket. Sn-glycerol 3-phosphate is bound by residues Arg82, Glu83, Tyr134, and Asp249. Glycerol is bound by residues Arg82, Glu83, Tyr134, Asp249, and Gln250. Residues Thr271 and Gly315 each contribute to the ADP site. Thr271, Gly315, Gln319, and Gly416 together coordinate ATP. Residues Gly416 and Asn420 each coordinate ADP.

This sequence belongs to the FGGY kinase family.

It catalyses the reaction glycerol + ATP = sn-glycerol 3-phosphate + ADP + H(+). The protein operates within polyol metabolism; glycerol degradation via glycerol kinase pathway; sn-glycerol 3-phosphate from glycerol: step 1/1. Inhibited by fructose 1,6-bisphosphate (FBP). Functionally, key enzyme in the regulation of glycerol uptake and metabolism. Catalyzes the phosphorylation of glycerol to yield sn-glycerol 3-phosphate. The polypeptide is Glycerol kinase (Mycolicibacterium vanbaalenii (strain DSM 7251 / JCM 13017 / BCRC 16820 / KCTC 9966 / NRRL B-24157 / PYR-1) (Mycobacterium vanbaalenii)).